The sequence spans 180 residues: Transcription factor HES-7.1-B (180 aa).

A bHLH domain is found at 13–70; it reads HRKLLKPLVEKRRRERINNSLEKLRIFLSQTLKSEKLKNPKVEKAEILECTVQFLQSR. An Orange domain is found at 84-116; that stretch reads YQSGFQHCLETTLHFMNSKPDMNGVTKELLSHQ. Positions 176–179 match the WRPW motif motif; sequence WRPW.

As to quaternary structure, transcription repression requires formation of a complex with a corepressor protein of the Groucho/TLE family. In terms of tissue distribution, expressed in the presumptive midbrain-hindbrain boundary (MHB) as early as the early gastrula stage (stage 10.5). Expression in the MHB continues through to tailbud stage. Also transiently expressed in the eye anlage at late neurula stage.

It localises to the nucleus. In terms of biological role, transcriptional repressor. Represses transcription from both N box- and E box-containing promoters. Demarcates the prospective midbrain-hindbrain boundary (MHB) region in the neuroectoderm in early gastrulae embryos by repressing transcription of a number of target genes. This Xenopus laevis (African clawed frog) protein is Transcription factor HES-7.1-B (hes7.1-b).